A 236-amino-acid polypeptide reads, in one-letter code: Uridylate kinase (236 aa).

Residue 10-13 coordinates ATP; it reads KLSG. Gly-52 contacts UMP. ATP contacts are provided by Gly-53 and Arg-57. UMP-binding positions include Asp-72 and 133 to 140; that span reads TGNPFFTT. Thr-160, Tyr-166, and Asp-169 together coordinate ATP.

The protein belongs to the UMP kinase family. In terms of assembly, homohexamer.

The protein resides in the cytoplasm. The enzyme catalyses UMP + ATP = UDP + ADP. The protein operates within pyrimidine metabolism; CTP biosynthesis via de novo pathway; UDP from UMP (UMPK route): step 1/1. Its activity is regulated as follows. Inhibited by UTP. Its function is as follows. Catalyzes the reversible phosphorylation of UMP to UDP. The sequence is that of Uridylate kinase from Bacteroides fragilis (strain ATCC 25285 / DSM 2151 / CCUG 4856 / JCM 11019 / LMG 10263 / NCTC 9343 / Onslow / VPI 2553 / EN-2).